The chain runs to 264 residues: MDNRPIGFLDSGVGGLTVVSELMRQLPHEKIIYIGDSARAPYGPRPAEQIREYTWELVRFLLTKHVKMIVFACNTATAVAWEEVKEALDIPVLGVILPGASAAIKATSGGKVGVIGTSMTISSGIYQEKIQLLAPTVQVTSLACPRFVPIVESNEISSSVAKKIVYETLAPLVGKIDTLVLGCTHYPLLRTIIQNVLGPQVKLIDSGAECVRDISVLLNYFEINGSRDDEHRRHHFYTTAGSDSFQAIASAWLNQTIDVEHVTL.

Substrate is bound by residues 10 to 11 (DS) and 42 to 43 (YG). The active-site Proton donor/acceptor is the Cys-73. 74-75 (NT) contacts substrate. Cys-183 functions as the Proton donor/acceptor in the catalytic mechanism. 184–185 (TH) serves as a coordination point for substrate.

This sequence belongs to the aspartate/glutamate racemases family.

The catalysed reaction is L-glutamate = D-glutamate. Its pathway is cell wall biogenesis; peptidoglycan biosynthesis. Provides the (R)-glutamate required for cell wall biosynthesis. The sequence is that of Glutamate racemase from Streptococcus equi subsp. zooepidemicus (strain H70).